We begin with the raw amino-acid sequence, 169 residues long: MGSKNPTKIEGARRAFEQYFDDVEIVGVEVSTSAPPQPFDAETVRGAIERAKKAYSPDFDFSVGIEAGLFRSECTITGYLDFQVAAVYDGERCTIGFGPGFEYPKLVVEEVLKGKEVGEVMEKVSGIKNLGKKVGAVHYLSKGAISRTDLSRISVTMALIPFINREMYL.

Asp58 is a binding site for Mg(2+).

This sequence belongs to the YjjX NTPase family. In terms of assembly, homodimer. Requires Mg(2+) as cofactor. Mn(2+) serves as cofactor.

It carries out the reaction XTP + H2O = XDP + phosphate + H(+). The catalysed reaction is ITP + H2O = IDP + phosphate + H(+). Phosphatase that hydrolyzes non-canonical purine nucleotides such as XTP and ITP to their respective diphosphate derivatives. Probably excludes non-canonical purines from DNA/RNA precursor pool, thus preventing their incorporation into DNA/RNA and avoiding chromosomal lesions. This Archaeoglobus fulgidus (strain ATCC 49558 / DSM 4304 / JCM 9628 / NBRC 100126 / VC-16) protein is Probable inosine/xanthosine triphosphatase.